The sequence spans 92 residues: Non-specific lipid-transfer protein 1 (92 aa).

4 disulfides stabilise this stretch: cysteine 4-cysteine 52, cysteine 14-cysteine 28, cysteine 29-cysteine 74, and cysteine 50-cysteine 88.

This sequence belongs to the plant LTP family. As to expression, expressed in seeds and, at very low levels, in pulp of fruit (at protein level).

In terms of biological role, plant non-specific lipid-transfer proteins transfer phospholipids as well as galactolipids across membranes. May play a role in wax or cutin deposition in the cell walls of expanding epidermal cells and certain secretory tissues. This chain is Non-specific lipid-transfer protein 1, found in Actinidia deliciosa (Kiwi).